Reading from the N-terminus, the 299-residue chain is Bifunctional protein FolD (299 aa).

NADP(+)-binding positions include 179-181 (GPG) and Ile245.

The protein belongs to the tetrahydrofolate dehydrogenase/cyclohydrolase family. As to quaternary structure, homodimer.

The enzyme catalyses (6R)-5,10-methylene-5,6,7,8-tetrahydrofolate + NADP(+) = (6R)-5,10-methenyltetrahydrofolate + NADPH. It catalyses the reaction (6R)-5,10-methenyltetrahydrofolate + H2O = (6R)-10-formyltetrahydrofolate + H(+). It participates in one-carbon metabolism; tetrahydrofolate interconversion. Its function is as follows. Catalyzes the oxidation of 5,10-methylenetetrahydrofolate to 5,10-methenyltetrahydrofolate and then the hydrolysis of 5,10-methenyltetrahydrofolate to 10-formyltetrahydrofolate. This chain is Bifunctional protein FolD, found in Deinococcus radiodurans (strain ATCC 13939 / DSM 20539 / JCM 16871 / CCUG 27074 / LMG 4051 / NBRC 15346 / NCIMB 9279 / VKM B-1422 / R1).